The following is a 165-amino-acid chain: MKYTSYILAFQLCIVLGSLGCYCQDPYVKEAENLKKYFNAGDPDVADNGTLFLDILRNWKEESDRKIMQSQIVSFYFKLFKSFKDDQRIQKSVETIKEDINVKFFNSNKKKRDDFEKLTNYSVTDLNVQRKAVHELIQVMAELSPAAKIGKRKRSQTFRGRRASQ.

The N-terminal stretch at 1–23 is a signal peptide; the sequence is MKYTSYILAFQLCIVLGSLGCYC. Gln24 bears the Pyrrolidone carboxylic acid mark. 2 N-linked (GlcNAc...) asparagine glycosylation sites follow: Asn48 and Asn120.

Belongs to the type II (or gamma) interferon family. Homodimer. Interacts with IFNGR1 (via extracellular domain); this interaction promotes IFNGR1 dimerization. As to expression, released primarily from activated T lymphocytes.

The protein localises to the secreted. In terms of biological role, type II interferon produced by immune cells such as T-cells and NK cells that plays crucial roles in antimicrobial, antiviral, and antitumor responses by activating effector immune cells and enhancing antigen presentation. Primarily signals through the JAK-STAT pathway after interaction with its receptor IFNGR1 to affect gene regulation. Upon IFNG binding, IFNGR1 intracellular domain opens out to allow association of downstream signaling components JAK2, JAK1 and STAT1, leading to STAT1 activation, nuclear translocation and transcription of IFNG-regulated genes. Many of the induced genes are transcription factors such as IRF1 that are able to further drive regulation of a next wave of transcription. Plays a role in class I antigen presentation pathway by inducing a replacement of catalytic proteasome subunits with immunoproteasome subunits. In turn, increases the quantity, quality, and repertoire of peptides for class I MHC loading. Increases the efficiency of peptide generation also by inducing the expression of activator PA28 that associates with the proteasome and alters its proteolytic cleavage preference. Up-regulates as well MHC II complexes on the cell surface by promoting expression of several key molecules such as cathepsins B/CTSB, H/CTSH, and L/CTSL. Participates in the regulation of hematopoietic stem cells during development and under homeostatic conditions by affecting their development, quiescence, and differentiation. The sequence is that of Interferon gamma (IFNG) from Cercocebus atys (Sooty mangabey).